The sequence spans 233 residues: Nickel import system ATP-binding protein NikE (233 aa).

In terms of domain architecture, ABC transporter spans 2–228; sequence IELKHVTFGY…DRHSYTKELV (227 aa). 35–42 contacts ATP; that stretch reads GESGCGKS.

It belongs to the ABC transporter superfamily. As to quaternary structure, the complex is composed of two ATP-binding proteins (NikD and NikE), two transmembrane proteins (NikB and NikC) and a solute-binding protein (NikA).

The protein resides in the cell membrane. The catalysed reaction is Ni(2+)(out) + ATP + H2O = Ni(2+)(in) + ADP + phosphate + H(+). In terms of biological role, part of the ABC transporter complex NikABCDE (Opp2) involved in nickel import. Probably responsible for energy coupling to the transport system. The sequence is that of Nickel import system ATP-binding protein NikE from Staphylococcus aureus (strain bovine RF122 / ET3-1).